A 499-amino-acid polypeptide reads, in one-letter code: Thioredoxin reductase 1, cytoplasmic (499 aa).

FAD-binding positions include 22–23 (SG), 42–43 (DF), 58–59 (TC), and 63–67 (SCIPK). C59 and C64 are joined by a disulfide. K68 carries the post-translational modification N6-succinyllysine. Y131 carries the phosphotyrosine modification. Residues 131–132 (YG) and T161 contribute to the FAD site. NADP(+)-binding positions include R166, 198–204 (ASYVALE), 221–222 (RS), R226, 226–228 (RGF), 292–293 (GR), and K315. Y200 serves as a coordination point for FAD. FAD-binding positions include D334, 341 to 343 (ELT), and H472. E341 lines the NADP(+) pocket. The active-site Proton acceptor is the H472. A cross-link (cysteinyl-selenocysteine (Cys-Sec)) is located at residues 497-498 (CU). U498 is a non-standard amino acid (selenocysteine).

Belongs to the class-I pyridine nucleotide-disulfide oxidoreductase family. Homodimer. The cofactor is FAD. Post-translationally, ISGylated.

It is found in the cytoplasm. It catalyses the reaction [thioredoxin]-dithiol + NADP(+) = [thioredoxin]-disulfide + NADPH + H(+). The enzyme catalyses H2O2 + NADPH + H(+) = NADP(+) + 2 H2O. In terms of biological role, reduces disulfideprotein thioredoxin (Trx) to its dithiol-containing form. Homodimeric flavoprotein involved in the regulation of cellular redox reactions, growth and differentiation. Contains a selenocysteine residue at the C-terminal active site that is essential for catalysis. Also has reductase activity on hydrogen peroxide (H2O2). The sequence is that of Thioredoxin reductase 1, cytoplasmic (TXNRD1) from Sus scrofa (Pig).